Consider the following 153-residue polypeptide: Ribonuclease P protein component (153 aa).

The protein belongs to the RnpA family. Consists of a catalytic RNA component (M1 or rnpB) and a protein subunit.

The enzyme catalyses Endonucleolytic cleavage of RNA, removing 5'-extranucleotides from tRNA precursor.. Its function is as follows. RNaseP catalyzes the removal of the 5'-leader sequence from pre-tRNA to produce the mature 5'-terminus. It can also cleave other RNA substrates such as 4.5S RNA. The protein component plays an auxiliary but essential role in vivo by binding to the 5'-leader sequence and broadening the substrate specificity of the ribozyme. The sequence is that of Ribonuclease P protein component from Helicobacter acinonychis (strain Sheeba).